Consider the following 1168-residue polypeptide: Transcription-repair-coupling factor (1168 aa).

A Helicase ATP-binding domain is found at 633–794 (DMQKSRPMDR…MLGVRDLSVI (162 aa)). ATP is bound at residue 646-653 (GDVGYGKT). Residues 747–750 (DEEQ) carry the DEEQ box motif. In terms of domain architecture, Helicase C-terminal spans 808 to 969 (VLEQNMSFIK…GFKIAMRDLN (162 aa)).

The protein in the N-terminal section; belongs to the UvrB family. It in the C-terminal section; belongs to the helicase family. RecG subfamily.

It is found in the cytoplasm. In terms of biological role, couples transcription and DNA repair by recognizing RNA polymerase (RNAP) stalled at DNA lesions. Mediates ATP-dependent release of RNAP and its truncated transcript from the DNA, and recruitment of nucleotide excision repair machinery to the damaged site. This Staphylococcus aureus (strain bovine RF122 / ET3-1) protein is Transcription-repair-coupling factor.